Consider the following 1534-residue polypeptide: Dicer-like protein 2 (1534 aa).

A compositionally biased stretch (basic and acidic residues) spans 1 to 10 (MDQDPRKDNP). Residues 1–36 (MDQDPRKDNPVEMDVDRDDSSQDPDDNESFKSALDE) form a disordered region. Positions 11–27 (VEMDVDRDDSSQDPDDN) are enriched in acidic residues. Positions 65–249 (TPAALTARAY…IEKLEQVLDA (185 aa)) constitute a Helicase ATP-binding domain. Position 78-85 (78-85 (MFEASLKQ)) interacts with ATP. The DEAH box signature appears at 192 to 195 (DEAH). The 172-residue stretch at 404-575 (KVQTLLKVLA…NAELELLDDP (172 aa)) folds into the Helicase C-terminal domain. Residues 597–700 (ARSHLNHFCA…LPTKVSDFLA (104 aa)) enclose the Dicer dsRNA-binding fold domain. RNase III domains are found at residues 959 to 1107 (MSLV…MCGG) and 1153 to 1353 (LEPL…VDSG). Residues Glu1193, Asp1339, and Glu1342 each contribute to the Mg(2+) site. A DRBM domain is found at 1383–1483 (HPNVELQILA…AEKGCLVIKA (101 aa)). Basic and acidic residues predominate over residues 1492-1504 (KAAAKEDKGHNTE). Residues 1492 to 1534 (KAAAKEDKGHNTENGDANADNGQSGEKEEVPDCRDADGDTVMN) form a disordered region. The segment covering 1505-1515 (NGDANADNGQS) has biased composition (polar residues). Residues 1516–1528 (GEKEEVPDCRDAD) show a composition bias toward basic and acidic residues.

It belongs to the helicase family. Dicer subfamily. It depends on Mg(2+) as a cofactor. Requires Mn(2+) as cofactor.

Its function is as follows. Dicer-like endonuclease involved in cleaving double-stranded RNA in the RNA interference (RNAi) pathway. Produces 21 to 25 bp dsRNAs (siRNAs) which target the selective destruction of homologous RNAs leading to sequence-specific suppression of gene expression, called post-transcriptional gene silencing (PTGS). Part of a broad host defense response against viral infection and transposons. Controls the expression of the non-LTR retrotransposon Tad in the African strain, Adiomopoume. This chain is Dicer-like protein 2 (dcl-2), found in Neurospora crassa (strain ATCC 24698 / 74-OR23-1A / CBS 708.71 / DSM 1257 / FGSC 987).